The sequence spans 142 residues: Small heat shock protein IbpB (142 aa).

The 112-residue stretch at 26-137 folds into the sHSP domain; sequence AGESQSFPPY…APQRIAISER (112 aa).

It belongs to the small heat shock protein (HSP20) family. As to quaternary structure, homodimer. Forms homomultimers of about 100-150 subunits at optimal growth temperatures. Conformation changes to oligomers at high temperatures or high ionic concentrations. The decrease in size of the multimers is accompanied by an increase in chaperone activity.

It is found in the cytoplasm. Associates with aggregated proteins, together with IbpA, to stabilize and protect them from irreversible denaturation and extensive proteolysis during heat shock and oxidative stress. Aggregated proteins bound to the IbpAB complex are more efficiently refolded and reactivated by the ATP-dependent chaperone systems ClpB and DnaK/DnaJ/GrpE. Its activity is ATP-independent. The polypeptide is Small heat shock protein IbpB (Klebsiella pneumoniae (strain 342)).